We begin with the raw amino-acid sequence, 118 residues long: Vitelline coat lysin (118 aa).

The polypeptide is Vitelline coat lysin (Tegula pfeifferi (Pfeiffer's top shell)).